Reading from the N-terminus, the 332-residue chain is Glyceraldehyde-3-phosphate dehydrogenase (332 aa).

NAD(+) is bound by residues 10 to 11 (RI), D36, K81, and S116. Residues 150–152 (SCT), T181, R197, 210–211 (TK), and R233 each bind D-glyceraldehyde 3-phosphate. C151 functions as the Nucleophile in the catalytic mechanism. Residue N314 coordinates NAD(+).

The protein belongs to the glyceraldehyde-3-phosphate dehydrogenase family. As to quaternary structure, homotetramer.

The protein localises to the cytoplasm. It catalyses the reaction D-glyceraldehyde 3-phosphate + phosphate + NAD(+) = (2R)-3-phospho-glyceroyl phosphate + NADH + H(+). Its pathway is carbohydrate degradation; glycolysis; pyruvate from D-glyceraldehyde 3-phosphate: step 1/5. Its function is as follows. Catalyzes the oxidative phosphorylation of glyceraldehyde 3-phosphate (G3P) to 1,3-bisphosphoglycerate (BPG) using the cofactor NAD. The first reaction step involves the formation of a hemiacetal intermediate between G3P and a cysteine residue, and this hemiacetal intermediate is then oxidized to a thioester, with concomitant reduction of NAD to NADH. The reduced NADH is then exchanged with the second NAD, and the thioester is attacked by a nucleophilic inorganic phosphate to produce BPG. In Helicobacter pylori (strain J99 / ATCC 700824) (Campylobacter pylori J99), this protein is Glyceraldehyde-3-phosphate dehydrogenase (gapA).